We begin with the raw amino-acid sequence, 677 residues long: Probable potassium transport system protein Kup (677 aa).

Transmembrane regions (helical) follow at residues 13–33 (GALI…LYTM), 54–74 (VSLV…IIAL), 98–118 (WLLL…TLTP), 137–157 (FIFP…LLIV), 171–191 (IFGP…LVNI), 217–237 (TGIF…ALYS), 249–269 (VSWI…GAWI), 296–316 (IFGV…LISG), 345–365 (MYIG…VWAF), 374–394 (AYGL…YQFI), 402–422 (ILAF…LIAS), and 429–449 (GGYA…IWFY).

Belongs to the HAK/KUP transporter (TC 2.A.72) family.

The protein resides in the cell membrane. It catalyses the reaction K(+)(in) + H(+)(in) = K(+)(out) + H(+)(out). Transport of potassium into the cell. Likely operates as a K(+):H(+) symporter. This chain is Probable potassium transport system protein Kup, found in Leuconostoc mesenteroides subsp. mesenteroides (strain ATCC 8293 / DSM 20343 / BCRC 11652 / CCM 1803 / JCM 6124 / NCDO 523 / NBRC 100496 / NCIMB 8023 / NCTC 12954 / NRRL B-1118 / 37Y).